Consider the following 207-residue polypeptide: Large ribosomal subunit protein uL4 (207 aa).

A disordered region spans residues 50-75 (KTKTRSEVAGSGKKPFKQKGTGNARQ).

Belongs to the universal ribosomal protein uL4 family. Part of the 50S ribosomal subunit.

In terms of biological role, one of the primary rRNA binding proteins, this protein initially binds near the 5'-end of the 23S rRNA. It is important during the early stages of 50S assembly. It makes multiple contacts with different domains of the 23S rRNA in the assembled 50S subunit and ribosome. Forms part of the polypeptide exit tunnel. The chain is Large ribosomal subunit protein uL4 from Pelobacter propionicus (strain DSM 2379 / NBRC 103807 / OttBd1).